Here is a 541-residue protein sequence, read N- to C-terminus: 2-succinyl-5-enolpyruvyl-6-hydroxy-3-cyclohexene-1-carboxylate synthase (541 aa).

The protein belongs to the TPP enzyme family. MenD subfamily. In terms of assembly, homodimer. It depends on Mg(2+) as a cofactor. Mn(2+) is required as a cofactor. Thiamine diphosphate serves as cofactor.

It catalyses the reaction isochorismate + 2-oxoglutarate + H(+) = 5-enolpyruvoyl-6-hydroxy-2-succinyl-cyclohex-3-ene-1-carboxylate + CO2. Its pathway is quinol/quinone metabolism; 1,4-dihydroxy-2-naphthoate biosynthesis; 1,4-dihydroxy-2-naphthoate from chorismate: step 2/7. The protein operates within quinol/quinone metabolism; menaquinone biosynthesis. Catalyzes the thiamine diphosphate-dependent decarboxylation of 2-oxoglutarate and the subsequent addition of the resulting succinic semialdehyde-thiamine pyrophosphate anion to isochorismate to yield 2-succinyl-5-enolpyruvyl-6-hydroxy-3-cyclohexene-1-carboxylate (SEPHCHC). This chain is 2-succinyl-5-enolpyruvyl-6-hydroxy-3-cyclohexene-1-carboxylate synthase, found in Leuconostoc mesenteroides subsp. mesenteroides (strain ATCC 8293 / DSM 20343 / BCRC 11652 / CCM 1803 / JCM 6124 / NCDO 523 / NBRC 100496 / NCIMB 8023 / NCTC 12954 / NRRL B-1118 / 37Y).